A 481-amino-acid polypeptide reads, in one-letter code: Dual specificity protein kinase CLK4 (481 aa).

Disordered regions lie at residues 1 to 47 and 102 to 143; these read MRHS…KPHH and SKSS…EDDE. Positions 8-19 are enriched in basic and acidic residues; the sequence is HCPDWDSRESWG. Composition is skewed to basic residues over residues 106-119 and 126-136; these read VRSR…KRNR and SHSKSHRRKRS. Ser-136 and Ser-138 each carry phosphoserine. The region spanning 159-475 is the Protein kinase domain; the sequence is YEIVDTLGEG…LDEALQHPFF (317 aa). Residues 165–173 and Lys-189 contribute to the ATP site; that span reads LGEGAFGKV. Asp-286 serves as the catalytic Proton acceptor.

It belongs to the protein kinase superfamily. CMGC Ser/Thr protein kinase family. Lammer subfamily. As to quaternary structure, interacts with UBL5. In terms of processing, autophosphorylates on all three types of residues. Expressed in the hippocampus, the cerebellum and the olfactory bulb.

Its subcellular location is the nucleus. It catalyses the reaction L-seryl-[protein] + ATP = O-phospho-L-seryl-[protein] + ADP + H(+). The catalysed reaction is L-threonyl-[protein] + ATP = O-phospho-L-threonyl-[protein] + ADP + H(+). The enzyme catalyses L-tyrosyl-[protein] + ATP = O-phospho-L-tyrosyl-[protein] + ADP + H(+). TG003 inhibits its kinase activity and affects the regulation of alternative splicing mediated by phosphorylation of SR proteins. Its function is as follows. Dual specificity kinase acting on both serine/threonine and tyrosine-containing substrates. Phosphorylates serine- and arginine-rich (SR) proteins of the spliceosomal complex and may be a constituent of a network of regulatory mechanisms that enable SR proteins to control RNA splicing. Phosphorylates SRSF1 and SRSF3. Required for the regulation of alternative splicing of MAPT/TAU. Regulates the alternative splicing of tissue factor (F3) pre-mRNA in endothelial cells. This is Dual specificity protein kinase CLK4 (Clk4) from Mus musculus (Mouse).